The chain runs to 558 residues: MAKLLSCVLGPRLYKIYRERDTDRAASSVPETPTAVPAASSSSWDTYYQPRALEKHADSILALASVFWSISYYSSPFAFFYLYRKGYLSLSKVVPFSHYAGTLLLLLAGVACLRGIGRWTNPQYRQFITILEATHRNQSAENKRQLANYNFDFRSWPVDFHWEEPSSRKGSRGGPSRRGVALLRPEPLHRGTADTFLNRVKKLPCQITSYLVAHTLGRRMLYPGSVYLLQKALMPVLLQGQARLVEECNGRRAKLLACDGNEIDTMFVDRRGTAEPQGQKLVICCEGNAGFYEVGCVSTPLEAGYSVLGWNHPGFAGSTGVPFPQNEANAMDVVVQFAIHRLGFQPQDIVIYAWSIGGFTATWAAMSYPDISAVILDASFDDLVPLALKVMPDSWRALVTRTVRQHLNLNNSEQLCRFQGPVLLVRRTKDEIITTTVPEDIMSNRGNDLLLKLLQFRYPRVMVEEGLRAVRQWLEASSQLEEASIYSRWEVEEDWCVSVLRSYQAEHGPDFPWSVGEDMSADGRRQLALFLARKHLHNFEATHCTPLPAQHFQMPWHL.

The next 2 helical transmembrane spans lie at 60–80 (ILALASVFWSISYYSSPFAFF) and 93–113 (VVPFSHYAGTLLLLLAGVACL). At 114 to 558 (RGIGRWTNPQ…AQHFQMPWHL (445 aa)) the chain is on the cytoplasmic side. The AB hydrolase-1 domain occupies 281 to 406 (LVICCEGNAG…ALVTRTVRQH (126 aa)). Catalysis depends on charge relay system residues S355, D430, and H507.

The protein belongs to the AB hydrolase superfamily. ABHD16 family.

The protein resides in the membrane. The catalysed reaction is 1-heptadecanoyl-2-(5Z,8Z,11Z,14Z-eicosatetraenoyl)-sn-glycero-3-phosphoserine + H2O = 1-heptadecanoyl-sn-glycero-3-phosphoserine + (5Z,8Z,11Z,14Z)-eicosatetraenoate + H(+). The enzyme catalyses 1-hexadecanoyl-2-(9Z-octadecenoyl)-sn-glycero-3-phospho-L-serine + H2O = 1-hexadecanoyl-sn-glycero-3-phospho-L-serine + (9Z)-octadecenoate + H(+). It carries out the reaction 1-octadecanoyl-2-(9Z,12Z-octadecadienoyl)-sn-glycero-3-phosphoserine + H2O = 1-octadecanoyl-sn-glycero-3-phosphoserine + (9Z,12Z)-octadecadienoate + H(+). It catalyses the reaction 1-heptadecanoyl-2-(5Z,8Z,11Z,14Z-eicosatetraenoyl)-sn-glycero-3-phosphocholine + H2O = 1-heptadecanoyl-sn-glycero-3-phosphocholine + (5Z,8Z,11Z,14Z)-eicosatetraenoate + H(+). The catalysed reaction is 1-hexadecanoyl-2-(9Z-octadecenoyl)-sn-glycero-3-phosphoglycerol + H2O = 1-hexadecanoyl-sn-glycero-3-phosphoglycerol + (9Z)-octadecenoate + H(+). The enzyme catalyses 1-hexadecanoyl-2-(9Z-octadecenoyl)-sn-glycero-3-phospho-(1D-myo-inositol) + H2O = 1-hexadecanoyl-sn-glycero-3-phospho-(1D-myo-inositol) + (9Z)-octadecenoate + H(+). It carries out the reaction 1-heptadecanoyl-2-(5Z,8Z,11Z,14Z-eicosatetraenoyl)-sn-glycero-3-phosphoethanolamine + H2O = 1-heptadecanoyl-sn-glycero-3-phosphoethanolamine + (5Z,8Z,11Z,14Z)-eicosatetraenoate + H(+). It catalyses the reaction 1-hexadecanoyl-2-(9Z-octadecenoyl)-sn-glycero-3-phospho-(1'-sn-glycerol) + H2O = 1-hexadecanoyl-sn-glycero-3-phospho-(1'-sn-glycerol) + (9Z)-octadecenoate + H(+). The catalysed reaction is Hydrolyzes glycerol monoesters of long-chain fatty acids.. The enzyme catalyses 1-tetradecanoylglycerol + H2O = tetradecanoate + glycerol + H(+). It carries out the reaction 2-hexadecanoylglycerol + H2O = glycerol + hexadecanoate + H(+). It catalyses the reaction 1-(9Z-octadecenoyl)-glycerol + H2O = glycerol + (9Z)-octadecenoate + H(+). The catalysed reaction is 2-(9Z-octadecenoyl)-glycerol + H2O = glycerol + (9Z)-octadecenoate + H(+). The enzyme catalyses 2-(9Z,12Z-octadecadienoyl)-glycerol + H2O = (9Z,12Z)-octadecadienoate + glycerol + H(+). It carries out the reaction 1-(5Z,8Z,11Z,14Z-eicosatetraenoyl)-glycerol + H2O = glycerol + (5Z,8Z,11Z,14Z)-eicosatetraenoate + H(+). It catalyses the reaction 2-(5Z,8Z,11Z,14Z-eicosatetraenoyl)-glycerol + H2O = glycerol + (5Z,8Z,11Z,14Z)-eicosatetraenoate + H(+). The catalysed reaction is prostaglandin D2-1-glycerol ester + H2O = prostaglandin D2 + glycerol + H(+). The enzyme catalyses 2-glyceryl-15-deoxy-Delta(12,14)-prostaglandin J2 + H2O = 15-deoxy-Delta(12,14)-prostaglandin J2 + glycerol + H(+). It carries out the reaction 1-(9Z,12Z-octadecadienoyl)-glycerol + H2O = (9Z,12Z)-octadecadienoate + glycerol + H(+). Its activity is regulated as follows. Specifically inhibited by alpha-alkylidene-beta-lactone KC01 ((Z)-6-(2-Oxo-4-tridecyloxetan-3-ylidene)hexanamide). Functionally, phosphatidylserine (PS) lipase that mediates the hydrolysis of phosphatidylserine to generate lysophosphatidylserine (LPS). LPS constitutes a class of signaling lipids that regulates immunological and neurological processes. Has no activity towards diacylglycerol, triacylglycerol or lysophosphatidylserine lipase. Also has monoacylglycerol lipase activity, with preference for 1-(9Z,12Z-octadecadienoyl)-glycerol (1-LG) and 2-glyceryl-15-deoxy-Delta(12,14)-prostaglandin J2 (15d-PGJ(2)-G). This chain is Phosphatidylserine lipase ABHD16A, found in Mus musculus (Mouse).